The sequence spans 153 residues: Coiled-coil domain-containing protein 182 (153 aa).

A coiled-coil region spans residues 46–109; it reads ADLEILQQKV…RLREEEDRGI (64 aa).

The chain is Coiled-coil domain-containing protein 182 (CCDC182) from Homo sapiens (Human).